Here is a 464-residue protein sequence, read N- to C-terminus: Fumarate hydratase class II 1 (464 aa).

Substrate-binding positions include 96-98 (SGT), 127-130 (HPND), 137-139 (SSN), and Thr-185. The active-site Proton donor/acceptor is His-186. Ser-316 is an active-site residue. Substrate-binding positions include Ser-317 and 322–324 (KVN).

It belongs to the class-II fumarase/aspartase family. Fumarase subfamily. As to quaternary structure, homotetramer.

The protein localises to the cytoplasm. It catalyses the reaction (S)-malate = fumarate + H2O. It participates in carbohydrate metabolism; tricarboxylic acid cycle; (S)-malate from fumarate: step 1/1. Functionally, involved in the TCA cycle. Catalyzes the stereospecific interconversion of fumarate to L-malate. The sequence is that of Fumarate hydratase class II 1 from Pseudomonas aeruginosa (strain ATCC 15692 / DSM 22644 / CIP 104116 / JCM 14847 / LMG 12228 / 1C / PRS 101 / PAO1).